The sequence spans 83 residues: Cytochrome b559 subunit alpha (83 aa).

A helical transmembrane segment spans residues 21–35 (VIHSITIPSLFIAGW). Residue His23 coordinates heme.

This sequence belongs to the PsbE/PsbF family. In terms of assembly, heterodimer of an alpha subunit and a beta subunit. PSII is composed of 1 copy each of membrane proteins PsbA, PsbB, PsbC, PsbD, PsbE, PsbF, PsbH, PsbI, PsbJ, PsbK, PsbL, PsbM, PsbT, PsbX, PsbY, PsbZ, Psb30/Ycf12, at least 3 peripheral proteins of the oxygen-evolving complex and a large number of cofactors. It forms dimeric complexes. The cofactor is heme b.

It localises to the plastid. The protein localises to the chloroplast thylakoid membrane. Functionally, this b-type cytochrome is tightly associated with the reaction center of photosystem II (PSII). PSII is a light-driven water:plastoquinone oxidoreductase that uses light energy to abstract electrons from H(2)O, generating O(2) and a proton gradient subsequently used for ATP formation. It consists of a core antenna complex that captures photons, and an electron transfer chain that converts photonic excitation into a charge separation. In Piper cenocladum (Ant piper), this protein is Cytochrome b559 subunit alpha.